A 274-amino-acid polypeptide reads, in one-letter code: Tryptophan synthase alpha chain (274 aa).

Catalysis depends on proton acceptor residues E49 and D60.

This sequence belongs to the TrpA family. In terms of assembly, tetramer of two alpha and two beta chains.

The enzyme catalyses (1S,2R)-1-C-(indol-3-yl)glycerol 3-phosphate + L-serine = D-glyceraldehyde 3-phosphate + L-tryptophan + H2O. It participates in amino-acid biosynthesis; L-tryptophan biosynthesis; L-tryptophan from chorismate: step 5/5. Functionally, the alpha subunit is responsible for the aldol cleavage of indoleglycerol phosphate to indole and glyceraldehyde 3-phosphate. In Alkalilimnicola ehrlichii (strain ATCC BAA-1101 / DSM 17681 / MLHE-1), this protein is Tryptophan synthase alpha chain.